Consider the following 397-residue polypeptide: Argininosuccinate synthase (397 aa).

8 to 16 (AYSGGLDTS) contributes to the ATP binding site. Y87 is an L-citrulline binding site. Residue G117 coordinates ATP. 3 residues coordinate L-aspartate: T119, N123, and D124. N123 is an L-citrulline binding site. R127, S175, E259, and Y271 together coordinate L-citrulline.

Belongs to the argininosuccinate synthase family. Type 1 subfamily. In terms of assembly, homotetramer.

Its subcellular location is the cytoplasm. It catalyses the reaction L-citrulline + L-aspartate + ATP = 2-(N(omega)-L-arginino)succinate + AMP + diphosphate + H(+). It functions in the pathway amino-acid biosynthesis; L-arginine biosynthesis; L-arginine from L-ornithine and carbamoyl phosphate: step 2/3. In Streptomyces griseus subsp. griseus (strain JCM 4626 / CBS 651.72 / NBRC 13350 / KCC S-0626 / ISP 5235), this protein is Argininosuccinate synthase.